The chain runs to 163 residues: GTP-dependent dephospho-CoA kinase (163 aa).

GTP contacts are provided by Asp-38, Val-39, Asp-57, Glu-115, and Asp-138.

Belongs to the GTP-dependent DPCK family.

The enzyme catalyses 3'-dephospho-CoA + GTP = GDP + CoA + H(+). The protein operates within cofactor biosynthesis; coenzyme A biosynthesis. Its function is as follows. Catalyzes the GTP-dependent phosphorylation of the 3'-hydroxyl group of dephosphocoenzyme A to form coenzyme A (CoA). In Methanothermobacter thermautotrophicus (strain ATCC 29096 / DSM 1053 / JCM 10044 / NBRC 100330 / Delta H) (Methanobacterium thermoautotrophicum), this protein is GTP-dependent dephospho-CoA kinase.